Consider the following 549-residue polypeptide: RNA-induced transcriptional silencing complex protein tas3 (549 aa).

5 disordered regions span residues 89-111, 126-184, 202-225, 298-361, and 381-430; these read KNSPAKAKATHTSSGVTKEVRAS, DGKE…SDSI, IRSSDSKSVGWDDNSTGFRESSKS, LDNF…HLEK, and AHFH…PLAS. Residues 298–307 show a composition bias toward polar residues; the sequence is LDNFNRPSQQ. Composition is skewed to basic and acidic residues over residues 328-361 and 403-416; these read YDSYHPDSRSDSYRSKREHYDNRDTGPRSKHLEK and SDRQRESRENELPT. Polar residues predominate over residues 419 to 430; it reads LNASDSHNPLAS.

In terms of assembly, ago1, chp1 and tas3 interact to form the core of the RNA-induced transcriptional silencing (RITS) complex. The RITS complex interacts with the RDRC complex via interaction between ago1 and hrr1. Clr4 has a role in mediating this interaction.

It is found in the nucleus. The protein localises to the cytoplasm. It localises to the cytoskeleton. The protein resides in the microtubule organizing center. Its subcellular location is the spindle pole body. In terms of biological role, has a role in the RNA interference (RNAi) pathway which is important for heterochromatin formation and accurate chromosome segregation. A member of the RNA-induced transcriptional silencing (RITS) complex which is involved in the biosynthesis of dsRNA from primer siRNAs provided by the RNA-directed RNA polymerase (RDRC) complex. The sequence is that of RNA-induced transcriptional silencing complex protein tas3 (tas3) from Schizosaccharomyces pombe (strain 972 / ATCC 24843) (Fission yeast).